A 119-amino-acid polypeptide reads, in one-letter code: MMRRYRRKNSSIPIIVEGRNDLASLRKLSFYGEIIVFNRGISITSFSDEISNKYREVIILTDFDNKGSFLKDRFYGYLTGMGVYVDLYLWNFIRKHVPIRTVEELPAEFEREVEKEIQM.

Residues 11-93 (SIPIIVEGRN…YVDLYLWNFI (83 aa)) form the Toprim domain. Mg(2+) is bound by residues E17, D62, and D64.

Belongs to the UPF0292 family. Mg(2+) serves as cofactor.

The protein is UPF0292 protein TV1259 of Thermoplasma volcanium (strain ATCC 51530 / DSM 4299 / JCM 9571 / NBRC 15438 / GSS1).